We begin with the raw amino-acid sequence, 281 residues long: uncharacterized protein (281 aa).

A disordered region spans residues 1 to 30 (MVQIQFHQGEPLGHKKEKPPPVSPPSPPPI). Pro residues predominate over residues 20–30 (PPVSPPSPPPI). 7 consecutive transmembrane segments (helical) span residues 58-78 (TVVF…LIPW), 88-107 (TLPF…AYWL), 117-137 (MLVM…GLCF), 145-165 (AYVL…LMAW), 171-191 (LAIL…IAVQ), 196-216 (YQRI…IVLI), and 248-268 (VIMF…PNYA).

It belongs to the cytomegalovirus US12 family.

It localises to the host membrane. This is an uncharacterized protein from Homo sapiens (Human).